Here is a 49-residue protein sequence, read N- to C-terminus: MRVNITLECTSCKERNYLTNKNKRNNPDRLEKQKYCPRERKVTLHRETK.

The segment at 20–49 is disordered; the sequence is NKNKRNNPDRLEKQKYCPRERKVTLHRETK. Basic and acidic residues predominate over residues 25-49; the sequence is NNPDRLEKQKYCPRERKVTLHRETK.

The protein belongs to the bacterial ribosomal protein bL33 family.

The chain is Large ribosomal subunit protein bL33C (rpmG3) from Enterococcus faecalis (strain ATCC 700802 / V583).